The sequence spans 429 residues: Mannose-6-phosphate isomerase (429 aa).

Gln-109, His-111, Glu-136, and His-281 together coordinate Zn(2+). Residue Arg-300 is part of the active site.

Belongs to the mannose-6-phosphate isomerase type 1 family. It depends on Zn(2+) as a cofactor.

The protein resides in the cytoplasm. It carries out the reaction D-mannose 6-phosphate = D-fructose 6-phosphate. It functions in the pathway nucleotide-sugar biosynthesis; GDP-alpha-D-mannose biosynthesis; alpha-D-mannose 1-phosphate from D-fructose 6-phosphate: step 1/2. Involved in the synthesis of the GDP-mannose and dolichol-phosphate-mannose required for a number of critical mannosyl transfer reactions. The sequence is that of Mannose-6-phosphate isomerase (PMI1) from Eremothecium gossypii (strain ATCC 10895 / CBS 109.51 / FGSC 9923 / NRRL Y-1056) (Yeast).